Reading from the N-terminus, the 265-residue chain is Novel plant SNARE 11 (265 aa).

Residues 1 to 215 (MDPISAVSEE…IGRQVATDKC (215 aa)) lie on the Cytoplasmic side of the membrane. The stretch at 30–75 (QKLEKIKDANRQSRQLEELTDKMRDCKSLIKDFDREIKSLESGNDA) forms a coiled coil. The region spanning 144–206 (NSMMDDTDQA…KKASKLVKEI (63 aa)) is the t-SNARE coiled-coil homology domain. The helical; Anchor for type IV membrane protein transmembrane segment at 216–236 (IMAFLFLIVIGVIAIIIVKIV) threads the bilayer. Topologically, residues 237–265 (NPNNKDIRDIPGVGLAPPAMNRRLLWNHY) are vesicular.

This sequence belongs to the novel plant SNARE family. Interacts with KNOLLE to form a t-SNARE complex. Does not interact with SYP21, VTI12 or VPS45. In terms of tissue distribution, expressed in roots, stems, flower, siliques, expanding leaves, but not in mature leaves. Not limited to dividing cells.

Its subcellular location is the membrane. Functionally, t-SNARE involved in diverse vesicle trafficking and membrane fusion processes, including cell plate formation. This is Novel plant SNARE 11 (NPSN11) from Arabidopsis thaliana (Mouse-ear cress).